Consider the following 695-residue polypeptide: Putative ATP-dependent RNA helicase L540 (695 aa).

The region spanning 53–219 (LSALENYQLV…FNSVDSTVID (167 aa)) is the Helicase ATP-binding domain. 66-73 (SSTGSGKS) contributes to the ATP binding site. Residues 164–167 (DEAH) carry the DEAH box motif. The Helicase C-terminal domain occupies 247-434 (LIEDLIHQQI…GINMMNQLMD (188 aa)).

The protein belongs to the DEAD box helicase family. DEAH subfamily.

It localises to the virion. The enzyme catalyses ATP + H2O = ADP + phosphate + H(+). The sequence is that of Putative ATP-dependent RNA helicase L540 from Acanthamoeba polyphaga (Amoeba).